Here is a 93-residue protein sequence, read N- to C-terminus: Long neurotoxin 1 (93 aa).

Residues 1–21 (MKTLLLTLVVVTIVCLDLGNS) form the signal peptide. 5 cysteine pairs are disulfide-bonded: C24–C42, C35–C63, C48–C52, C67–C78, and C79–C84.

It belongs to the three-finger toxin family. Long-chain subfamily. Type II alpha-neurotoxin sub-subfamily. As to expression, expressed by the venom gland.

It is found in the secreted. Functionally, binds with high affinity to muscular (alpha-1/CHRNA1) and neuronal (alpha-7/CHRNA7) nicotinic acetylcholine receptor (nAChR) and inhibits acetylcholine from binding to the receptor, thereby impairing neuromuscular and neuronal transmission. This Tropidechis carinatus (Australian rough-scaled snake) protein is Long neurotoxin 1.